Reading from the N-terminus, the 57-residue chain is Large ribosomal subunit protein bL32 (57 aa).

A compositionally biased stretch (basic residues) spans 1-20 (MAVPKKKTSKTKRDQRKANW). The interval 1–21 (MAVPKKKTSKTKRDQRKANWK) is disordered.

The protein belongs to the bacterial ribosomal protein bL32 family.

This is Large ribosomal subunit protein bL32 from Rippkaea orientalis (strain PCC 8801 / RF-1) (Cyanothece sp. (strain PCC 8801)).